A 247-amino-acid chain; its full sequence is STING ER exit protein (247 aa).

S127 is modified (phosphoserine). The stretch at 195-216 forms a coiled coil; the sequence is EAREIADSYANNARIIEKQLQR. A disordered region spans residues 215–247; sequence QRKGGKLSDVGIKTKTEDAPPPQKKQRGTLLER.

It belongs to the STEEP1 family.

In terms of biological role, molecular adapter that stimulates membrane curvature formation and subsequent endoplasmic reticulum exit site (ERES) establishment by recruiting PI3K complex I, leading to COPII vesicle-mediated transport. In Drosophila melanogaster (Fruit fly), this protein is STING ER exit protein.